Consider the following 331-residue polypeptide: Probable cytosolic iron-sulfur protein assembly protein Ciao1 (331 aa).

7 WD repeats span residues 12–51 (GHKGRIWGVAWHPKGNSFASCGEDKAIRIWSLSGNTWTTK), 57–96 (GHKRTIREVRWSPCGEYLASASFDATTAIWSKHECTATLE), 97–136 (GHENEVKSVSWSRSGGLLATCSRDKSVWIWEVAGDDEFEC), 142–181 (AHSQDVKRVVWHPTKEILASASYDNTIKMYAESALDSDWD), 188–227 (SHTSTVWSIDFDADGERLVSCSDDATLKIWRAYHPGNEAG), 246–285 (LHTRAIYDVSWCKLTGLIASACGDDAIRIFKESSDSKRDA), and 297–331 (AHEQDVNAVEWNPVNVGQLISCSDDGTIKIWKLQE).

Belongs to the WD repeat CIA1 family.

Its function is as follows. Essential component of the cytosolic iron-sulfur (Fe/S) protein assembly machinery. Required for the maturation of extramitochondrial Fe/S proteins. The sequence is that of Probable cytosolic iron-sulfur protein assembly protein Ciao1 from Drosophila mojavensis (Fruit fly).